The sequence spans 719 residues: Pesticidal crystal protein Cry1Id (719 aa).

This sequence belongs to the delta endotoxin family.

Functionally, promotes colloidosmotic lysis by binding to the midgut epithelial cells of many lepidopteran larvae. Active on Plutella xylostella and on Bombyx mori. The polypeptide is Pesticidal crystal protein Cry1Id (cry1Id) (Bacillus thuringiensis).